A 171-amino-acid chain; its full sequence is Co-chaperone protein HscB (171 aa).

In terms of domain architecture, J spans 2–74 (DYFTFFGLPA…LMRAEYLLSL (73 aa)).

It belongs to the HscB family. Interacts with HscA and stimulates its ATPase activity. Interacts with IscU.

Functionally, co-chaperone involved in the maturation of iron-sulfur cluster-containing proteins. Seems to help targeting proteins to be folded toward HscA. The polypeptide is Co-chaperone protein HscB (Shigella sonnei (strain Ss046)).